A 332-amino-acid chain; its full sequence is T-cell leukemia homeobox protein 1 (332 aa).

The segment at residues 203–262 is a DNA-binding region (homeobox); sequence KKKPRTSFTRLQICELEKRFHRQKYLASAERAALAKALKMTDAQVKTWFQNRRTKWRRQT. Lysine 238 carries the post-translational modification N6-acetyllysine.

In terms of tissue distribution, expressed in various embryonic tissues, including branchial arches, some component of the nervous system and spleen.

It is found in the nucleus. Functionally, controls the genesis of the spleen. Binds to the DNA sequence 5'-GGCGGTAAGTGG-3'. This chain is T-cell leukemia homeobox protein 1 (Tlx1), found in Mus musculus (Mouse).